The following is a 48-amino-acid chain: Omega-agatoxin-Aa5a (48 aa).

Intrachain disulfides connect Cys3–Cys16, Cys10–Cys21, Cys15–Cys32, and Cys23–Cys30.

Belongs to the neurotoxin 02 (plectoxin) family. As to expression, expressed by the venom gland.

The protein localises to the secreted. The toxin blocks voltage-gated calcium channels in rat cerebellar granule cells (IC(50)=200 nM). This Agelenopsis aperta (North American funnel-web spider) protein is Omega-agatoxin-Aa5a.